The chain runs to 273 residues: Bis(5'-nucleosyl)-tetraphosphatase, symmetrical (273 aa).

This sequence belongs to the Ap4A hydrolase family.

It carries out the reaction P(1),P(4)-bis(5'-adenosyl) tetraphosphate + H2O = 2 ADP + 2 H(+). Functionally, hydrolyzes diadenosine 5',5'''-P1,P4-tetraphosphate to yield ADP. This Aeromonas hydrophila subsp. hydrophila (strain ATCC 7966 / DSM 30187 / BCRC 13018 / CCUG 14551 / JCM 1027 / KCTC 2358 / NCIMB 9240 / NCTC 8049) protein is Bis(5'-nucleosyl)-tetraphosphatase, symmetrical.